A 498-amino-acid polypeptide reads, in one-letter code: Cytochrome P450 monooxygenase aflU (498 aa).

A helical transmembrane segment spans residues 5–27 (TVYTSLIGLLVALTVRSIYRVYF). Asn259 and Asn354 each carry an N-linked (GlcNAc...) asparagine glycan. Heme is bound at residue Cys438.

This sequence belongs to the cytochrome P450 family. The cofactor is heme.

Its subcellular location is the membrane. It functions in the pathway mycotoxin biosynthesis; aflatoxin biosynthesis. Its function is as follows. Cytochrome P450 monooxygenase; part of the gene cluster that mediates the biosynthesis of aflatoxins, a group of polyketide-derived furanocoumarins, and part of the most toxic and carcinogenic compounds among the known mycotoxins. The four major aflatoxins produced by A.parasiticus are aflatoxin B1 (AFB1), aflatoxin B2 (AFB2), aflatoxin G1 (AFG1) and aflatoxin G2 (AFG2). Within the aflatoxin pathway, the cytochrome P450 monooxygenase aflU is involved in the last steps in which OMST is converted to aflatoxins B1 and G1, and DHOMST to aflatoxins B2 and G2. The biosynthesis of aflatoxins begins with the norsolorinic acid synthase aflC that combines a hexanoyl starter unit produced by the fatty acid synthase aflA/aflB and 7 malonyl-CoA extender units to synthesize the precursor NOR. The second step is the conversion of NOR to averantin and requires the norsolorinic acid ketoreductase aflD, which catalyzes the dehydration of norsolorinic acid to form (1'S)-averantin. The norsolorinic acid reductases aflE and aflF may also play a role in the conversion of NOR to AVN. The cytochrome P450 monooxygenase aflG then catalyzes the hydroxylation of AVN to 5'hydroxyaverantin (HAVN). The next step is performed by the 5'-hydroxyaverantin dehydrogenase aflH that transforms HAVN to 5'-oxoaverantin (OAVN) which is further converted to averufin (AVF) by aflK that plays a dual role in the pathway, as a 5'-oxoaverantin cyclase that mediates conversion of 5'-oxoaverantin, as well as a versicolorin B synthase in a later step in the pathway. The averufin oxidase aflI catalyzes the conversion of AVF to versiconal hemiacetal acetate (VHA). VHA is then the substrate for the versiconal hemiacetal acetate esterase aflJ to yield versiconal (VAL). Versicolorin B synthase aflK then converts VAL to versicolorin B (VERB) by closing the bisfuran ring of aflatoxin which is required for DNA-binding, thus giving to aflatoxin its activity as a mutagen. Then, the activity of the versicolorin B desaturase aflL leads to versicolorin A (VERA). A branch point starts from VERB since it can also be converted to dihydrodemethylsterigmatocystin (DMDHST), probably also by aflL, VERA being a precursor for aflatoxins B1 and G1, and DMDHST for aflatoxins B2 and G2. Next, the versicolorin reductase aflM and the cytochrome P450 monooxygenase aflN are involved in conversion of VERA to demethylsterigmatocystin (DMST). AflX and aflY seem also involved in this step, through probable aflX-mediated epoxide ring-opening step following versicolorin A oxidation and aflY-mediated Baeyer-Villiger oxidation required for the formation of the xanthone ring. The methyltransferase aflO then leads to the modification of DMST to sterigmatocystin (ST), and of DMDHST to dihydrosterigmatocystin (DHST). Both ST and DHST are then substrates of the O-methyltransferase aflP to yield O-methylsterigmatocystin (OMST) and dihydro-O-methylsterigmatocystin (DHOMST), respectively. Finally OMST is converted to aflatoxins B1 and G1, and DHOMST to aflatoxins B2 and G2, via the action of several enzymes including O-methylsterigmatocystin oxidoreductase aflQ, the cytochrome P450 monooxygenase aflU, but also the NADH-dependent flavin oxidoreductase nadA which is specifically required for the synthesis of AFG1. In Aspergillus parasiticus (strain ATCC 56775 / NRRL 5862 / SRRC 143 / SU-1), this protein is Cytochrome P450 monooxygenase aflU.